The chain runs to 77 residues: Secapin (77 aa).

Positions 1–32 are cleaved as a signal peptide; the sequence is MKNYSKNATHLITVLLFSFVVILLIIPSKCEA. The propeptide occupies 33 to 52; the sequence is VSNDMQPLEARSADLIPEPR. A disulfide bridge connects residues Cys61 and Cys72.

This sequence belongs to the secapin family. As to expression, expressed by the venom gland.

It is found in the secreted. Functionally, nontoxic peptide. This chain is Secapin, found in Vespa velutina nigrithorax (Hornet).